Here is a 191-residue protein sequence, read N- to C-terminus: Large ribosomal subunit protein bL25 (191 aa).

This sequence belongs to the bacterial ribosomal protein bL25 family. CTC subfamily. Part of the 50S ribosomal subunit; part of the 5S rRNA/L5/L18/L25 subcomplex. Contacts the 5S rRNA. Binds to the 5S rRNA independently of L5 and L18.

This is one of the proteins that binds to the 5S RNA in the ribosome where it forms part of the central protuberance. The polypeptide is Large ribosomal subunit protein bL25 (Nitratidesulfovibrio vulgaris (strain DSM 19637 / Miyazaki F) (Desulfovibrio vulgaris)).